The following is a 212-amino-acid chain: HTH-type transcriptional regulator RutR (212 aa).

The HTH tetR-type domain maps to 17 to 77 (SAKKKAILSA…AVLRQILDIW (61 aa)). Positions 39–58 (TRLEQIAELAGVSKTNLLYY) form a DNA-binding region, H-T-H motif.

In terms of assembly, homodimer.

Functionally, master transcription regulator which represses the degradation of pyrimidines (rutABCDEFG) and purines (gcl operon) for maintenance of metabolic balance between pyrimidines and purines. It also regulates the synthesis of pyrimidine nucleotides and arginine from glutamine (carAB) and the supply of glutamate (gadABWX). This Escherichia coli O157:H7 protein is HTH-type transcriptional regulator RutR (rutR).